The chain runs to 537 residues: Sodium/hydrogen exchanger 9B2 (537 aa).

The segment covering 1 to 10 (MGDEDKRITY) has biased composition (basic and acidic residues). A disordered region spans residues 1-28 (MGDEDKRITYEDSEPSTGMNYTPSMHQE). Residues 1–86 (MGDEDKRITY…ACPPHGLLDR (86 aa)) are Cytoplasmic-facing. Residues 15–27 (PSTGMNYTPSMHQ) are compositionally biased toward polar residues. At serine 49 the chain carries Phosphoserine. A helical membrane pass occupies residues 87–104 (VITNVTIIVLLWAVVWSI). The Extracellular portion of the chain corresponds to 105–113 (TGSECLPGG). A helical membrane pass occupies residues 114-133 (NLFGIIILFYCAIIGGKLLG). At 134–144 (LIKLPTLPPLP) the chain is on the cytoplasmic side. A helical transmembrane segment spans residues 145–161 (SLLGMLLAGFLIRNIPV). At 162-171 (INDNVQIKHK) the chain is on the extracellular side. A helical membrane pass occupies residues 172–189 (WSSSLRSIALSIILVRAG). The Cytoplasmic portion of the chain corresponds to 190–200 (LGLDSKALKKL). The helical transmembrane segment at 201–227 (KGVCVRLSMGPCIVEACTSALLAHYLL) threads the bilayer. Residues 228–233 (GLPWQW) lie on the Extracellular side of the membrane. The helical transmembrane segment at 234–242 (GFILGFVLG) threads the bilayer. Residues 243-270 (AVSPAVVVPSMLLLQGGGYGVEKGVPTL) lie on the Cytoplasmic side of the membrane. Positions 244, 275, 278, and 279 each coordinate Na(+). A helical transmembrane segment spans residues 271–290 (LMAAGSFDDILAITGFNTCL). Over 291-300 (GIAFSTGSTV) the chain is Extracellular. A helical membrane pass occupies residues 301–324 (FNVLRGVLEVVIGVATGSVLGFFI). Over 325–339 (QYFPSRDQDKLVCKR) the chain is Cytoplasmic. The chain crosses the membrane as a helical span at residues 340-357 (TFLVLGLSVLAVFSSVHF). Residues 358–361 (GFPG) lie on the Extracellular side of the membrane. Residues 362–373 (SGGLCTLVMAFL) traverse the membrane as a helical segment. Residues 374 to 390 (AGMGWTSEKAEVEKIIA) lie on the Cytoplasmic side of the membrane. Residues 391–411 (VAWDIFQPLLFGLIGAEVSIA) form a helical membrane-spanning segment. Over 412–417 (SLRPET) the chain is Extracellular. A helical transmembrane segment spans residues 418 to 440 (VGLCVATVGIAVLIRILTTFLMV). The Cytoplasmic segment spans residues 441-461 (CFAGFNLKEKIFISFAWLPKA). Residues 462 to 473 (TVQAAIGSVALD) traverse the membrane as a helical segment. Residues 474-486 (TARSHGEKQLEDY) lie on the Extracellular side of the membrane. The helical transmembrane segment at 487–509 (GMDVLTVAFLSILITAPIGSLLI) threads the bilayer. Over 510-537 (GLLGPRLLQKVEHQNKDEEVQGETSVQV) the chain is Cytoplasmic.

This sequence belongs to the monovalent cation:proton antiporter 1 (CPA1) transporter (TC 2.A.36) family. Homodimer. Dimerization is essential for SLC9B2 activity. Lipids seem to play a role in the stabilization of the dimerization subdomain. Widely expressed. High levels detected in the distal tubules of the kidney nephron. Detected in red blood cells (at protein level).

The protein resides in the cell membrane. It localises to the mitochondrion membrane. The protein localises to the endosome membrane. It is found in the recycling endosome membrane. Its subcellular location is the cytoplasmic vesicle. The protein resides in the secretory vesicle. It localises to the synaptic vesicle membrane. The protein localises to the cell projection. It is found in the cilium. Its subcellular location is the flagellum membrane. The protein resides in the basolateral cell membrane. It localises to the apical cell membrane. The enzyme catalyses Li(+)(out) + H(+)(in) = Li(+)(in) + H(+)(out). The catalysed reaction is Li(+)(in) + Na(+)(out) = Li(+)(out) + Na(+)(in). It carries out the reaction Na(+)(in) + H(+)(out) = Na(+)(out) + H(+)(in). Allosterically inhibited by the N-terminal domain. Inhibited by phloretin. In terms of biological role, electroneutral Na(+) Li(+)/H(+) antiporter that extrudes Na(+) or Li(+) in exchange for external protons across the membrane. Uses the proton gradient/membrane potential to extrude sodium. Contributes to the regulation of intracellular pH and sodium homeostasis. Also able to mediate Na(+)/Li(+) antiporter activity in kidney. May play a physiological role in renal tubular function and blood pressure homeostasis. Plays an important role for insulin secretion and clathrin-mediated endocytosis in beta-cells. Involved in sperm motility and fertility. It is controversial whether SLC9B2 plays a role in osteoclast differentiation or not. This is Sodium/hydrogen exchanger 9B2 from Homo sapiens (Human).